A 485-amino-acid chain; its full sequence is NADH-quinone oxidoreductase subunit N (485 aa).

A run of 14 helical transmembrane segments spans residues 8–28 (LIAL…MLSI), 35–55 (FLNA…LWFV), 71–91 (GFAM…CTFA), 105–125 (FYLL…ANHL), 127–147 (SLFL…GYAF), 159–179 (YTIL…LVYA), 203–223 (LLAG…LVPF), 235–255 (PAPV…GVVM), 271–291 (VVLA…ALSQ), 297–317 (LLGY…IALQ), 326–346 (VGVY…VVSL), 373–393 (AAVM…LGFI), 408–430 (WWLV…RVAV), and 455–475 (IVVL…QPLI).

This sequence belongs to the complex I subunit 2 family. NDH-1 is composed of 13 different subunits. Subunits NuoA, H, J, K, L, M, N constitute the membrane sector of the complex.

It is found in the cell inner membrane. It catalyses the reaction a quinone + NADH + 5 H(+)(in) = a quinol + NAD(+) + 4 H(+)(out). Functionally, NDH-1 shuttles electrons from NADH, via FMN and iron-sulfur (Fe-S) centers, to quinones in the respiratory chain. The immediate electron acceptor for the enzyme in this species is believed to be ubiquinone. Couples the redox reaction to proton translocation (for every two electrons transferred, four hydrogen ions are translocated across the cytoplasmic membrane), and thus conserves the redox energy in a proton gradient. The chain is NADH-quinone oxidoreductase subunit N from Shigella dysenteriae serotype 1 (strain Sd197).